The following is a 262-amino-acid chain: Thrombin-like enzyme gyroxin B1.4 (262 aa).

The N-terminal stretch at 1-18 (MVLIRVLANLLILQLSYA) is a signal peptide. A propeptide spanning residues 19–262 (QKSSELVIGG…AGNTIVNCPP (244 aa)) is cleaved from the precursor. One can recognise a Peptidase S1 domain in the interval 25 to 253 (VIGGDECNIN…HLDWIQSIIA (229 aa)). Disulfide bonds link Cys-31–Cys-165, Cys-52–Cys-68, Cys-102–Cys-260, Cys-144–Cys-214, Cys-176–Cys-193, and Cys-204–Cys-229. The active-site Charge relay system is His-67. An N-linked (GlcNAc...) asparagine glycan is attached at Asn-105. Asp-112 serves as the catalytic Charge relay system. The active-site Charge relay system is the Ser-208.

This sequence belongs to the peptidase S1 family. Snake venom subfamily. Monomer. Expressed by the venom gland.

Its subcellular location is the secreted. Thrombin-like snake venom serine protease. Displays a specificity similar to trypsin. Releases only fibrinopeptide A in the conversion of fibrinogen to fibrin. Shows coagulant, esterase and amidase activities. Reversibly increases the permeability of the blood brain barrier (BBB) in mice. Induces the barrel rotation syndrome in mice, which is manifested by gyroxin-like, rapid rolling motions. This syndrome may be due to its effect on BBB permeability, and certainly also to other actions affecting endogenous substrates present in the endothelium, nervous tissues or blood. The chain is Thrombin-like enzyme gyroxin B1.4 from Crotalus durissus terrificus (South American rattlesnake).